Here is a 117-residue protein sequence, read N- to C-terminus: MTRIKRGYIARRRRTKLRLFASSFRGAHSRLTRTMTQQRIRALVSAHRDRGKRKRDFRRLWITRINAVIHEMGVFYSYNQFIHNLYKKQLLLNRKILAQIALLNRSCLYTISNDIKK.

It belongs to the bacterial ribosomal protein bL20 family.

The protein resides in the plastid. It localises to the chloroplast. Binds directly to 23S ribosomal RNA and is necessary for the in vitro assembly process of the 50S ribosomal subunit. It is not involved in the protein synthesizing functions of that subunit. The sequence is that of Large ribosomal subunit protein bL20c from Olimarabidopsis pumila (Dwarf rocket).